A 150-amino-acid polypeptide reads, in one-letter code: Large ribosomal subunit protein bL9 (150 aa).

This sequence belongs to the bacterial ribosomal protein bL9 family.

Binds to the 23S rRNA. The chain is Large ribosomal subunit protein bL9 from Streptococcus agalactiae serotype III (strain NEM316).